A 156-amino-acid polypeptide reads, in one-letter code: Small ribosomal subunit protein uS7 (156 aa).

This sequence belongs to the universal ribosomal protein uS7 family. Part of the 30S ribosomal subunit. Contacts proteins S9 and S11.

Functionally, one of the primary rRNA binding proteins, it binds directly to 16S rRNA where it nucleates assembly of the head domain of the 30S subunit. Is located at the subunit interface close to the decoding center, probably blocks exit of the E-site tRNA. The sequence is that of Small ribosomal subunit protein uS7 from Maridesulfovibrio salexigens (strain ATCC 14822 / DSM 2638 / NCIMB 8403 / VKM B-1763) (Desulfovibrio salexigens).